The primary structure comprises 270 residues: Nuclease P1 (270 aa).

Tryptophan 1, histidine 6, histidine 15, aspartate 45, and histidine 60 together coordinate a divalent metal cation. 1–6 (WGALGH) contributes to the substrate binding site. Residues 45 to 51 (DEYRLTS), 60 to 63 (HFID), and 73 to 78 (NVDYER) each bind substrate. 2 cysteine pairs are disulfide-bonded: cysteine 72–cysteine 217 and cysteine 80–cysteine 85. Asparagine 92 carries N-linked (GlcNAc...) asparagine glycosylation. Positions 116, 120, and 126 each coordinate a divalent metal cation. Positions 116–164 (HFIGDMTQPLHDEAYAVGGNKINVTFDGYHDNLHSDWDTYMPQKLIGGH) are substrate binding. An N-linked (GlcNAc...) asparagine glycan is attached at asparagine 138. Positions 149 and 153 each coordinate a divalent metal cation. N-linked (GlcNAc...) asparagine glycosylation is found at asparagine 184 and asparagine 197.

It belongs to the nuclease type I family. The cofactor is Zn(2+).

The protein resides in the secreted. The catalysed reaction is Endonucleolytic cleavage to 5'-phosphomononucleotide and 5'-phosphooligonucleotide end-products.. In terms of biological role, hydrolyzes only single-stranded DNA and RNA without apparent specificity for bases. This chain is Nuclease P1, found in Penicillium citrinum.